We begin with the raw amino-acid sequence, 564 residues long: MATATIALQVNGQQGGGSEPAAAAAAAAAAVVAAGDKWKPPQGTESIKMENGQSTGTKLGLPPLTPEQQEALQKAKKYAMEQSIKSVLVKQTIAHQQQQLTNLQMAAVTMGFGDPLSPLQSMAAQRQRALAIMCRVYVGSIYYELGEDTIRQAFAPFGPIKSIDMSWDSVTMKHKGFAFVEYEVPEAAQLALEQMNSVMLGGRNIKVGRPSNIGQAQPIIDQLAEEARAFNRIYVASVHQDLSDDDIKSVFEAFGKIKSCTLARDPTTGKHKGYGFIEYEKAQSSQDAVSSMNLFDLGGQYLRVGKAVTPPMPLLTPATPGGLPPAAAVAAAAATAKITAQEAVAGAAVLGTLATPGLVSPALTLAQPLGALPQAVMAAQAPGVITGVTPARPPIPVTIPSVGVVNPILASPPTLGLLEPKKEKEEEELFPESERPEMLSEQEHMSISGSSARHMVMQKLLRKQESTVMVLRNMVDPKDIDDDLEGEVTEECGKFGAVNRVIIYQEKQGEEEDAEIIVKIFVEFSMASETHKAIQALNGRWFGGRKVVAEVYDQERFDNSDLSA.

The tract at residues 1-521 is inhibits homodimerization; sequence MATATIALQV…EDAEIIVKIF (521 aa). A disordered region spans residues 37–61; it reads KWKPPQGTESIKMENGQSTGTKLGL. K48 participates in a covalent cross-link: Glycyl lysine isopeptide (Lys-Gly) (interchain with G-Cter in SUMO2). T65 carries the post-translational modification Phosphothreonine. The tract at residues 82-564 is inhibits transcriptional repression, interaction with ERCC3 and apoptosis induction; that stretch reads QSIKSVLVKQ…ERFDNSDLSA (483 aa). Residue K85 forms a Glycyl lysine isopeptide (Lys-Gly) (interchain with G-Cter in SUMO2) linkage. Phosphoserine is present on S117. 2 consecutive RRM domains span residues 134 to 212 and 231 to 309; these read CRVY…RPSN and NRIY…KAVT. Residue S249 is modified to Phosphoserine. The residue at position 256 (K256) is an N6-acetyllysine. Phosphothreonine is present on T319. A disordered region spans residues 421–442; the sequence is KKEKEEEELFPESERPEMLSEQ. Residue K424 forms a Glycyl lysine isopeptide (Lys-Gly) (interchain with G-Cter in SUMO2) linkage. Residues 432-442 are compositionally biased toward basic and acidic residues; that stretch reads ESERPEMLSEQ. K459 is modified (N6-acetyllysine). K463 participates in a covalent cross-link: Glycyl lysine isopeptide (Lys-Gly) (interchain with G-Cter in SUMO2). The region spanning 467 to 554 is the RRM 3; atypical domain; the sequence is TVMVLRNMVD…RKVVAEVYDQ (88 aa).

Belongs to the RRM half pint family. Homodimer. Associates with the spliceosome. Found in a complex with RO60 and Y5 RNA. Found in a complex with FUBP1 and far upstream element (FUSE) DNA segment. Interacts directly with ERCC3. Interacts with CDK7 and GTF2H1. Interacts with SRSF11/P54. Interacts with ARGLU1; interaction may be involved in ARGLU1-mediated modulation of alternative splicing.

Its subcellular location is the nucleus. Functionally, DNA- and RNA-binding protein, involved in several nuclear processes such as pre-mRNA splicing, apoptosis and transcription regulation. In association with FUBP1 regulates MYC transcription at the P2 promoter through the core-TFIIH basal transcription factor. Acts as a transcriptional repressor through the core-TFIIH basal transcription factor. Represses FUBP1-induced transcriptional activation but not basal transcription. Decreases ERCC3 helicase activity. Is also involved in pre-mRNA splicing. Promotes splicing of an intron with weak 3'-splice site and pyrimidine tract in a cooperative manner with U2AF2. Involved in apoptosis induction when overexpressed in HeLa cells. Modulates alternative splicing of several mRNAs. Binds to relaxed DNA of active promoter regions. Binds to the pyrimidine tract and 3'-splice site regions of pre-mRNA; binding is enhanced in presence of U2AF2. Binds to Y5 RNA in association with RO60. Binds to poly(U) RNA. This chain is Poly(U)-binding-splicing factor PUF60, found in Rattus norvegicus (Rat).